The primary structure comprises 262 residues: 4-hydroxy-2-oxo-heptane-1,7-dioate aldolase (262 aa).

Histidine 45 acts as the Proton acceptor in catalysis. A substrate-binding site is contributed by glutamine 147. Glutamate 149 provides a ligand contact to a divalent metal cation. Positions 174 and 175 each coordinate substrate. Residue aspartate 175 participates in a divalent metal cation binding.

Belongs to the HpcH/HpaI aldolase family. Homohexamer; trimer of dimers. The cofactor is a divalent metal cation.

It catalyses the reaction 4-hydroxy-2-oxoheptanedioate = succinate semialdehyde + pyruvate. It participates in aromatic compound metabolism; 4-hydroxyphenylacetate degradation; pyruvate and succinate semialdehyde from 4-hydroxyphenylacetate: step 7/7. Functionally, catalyzes the reversible retro-aldol cleavage of 4-hydroxy-2-ketoheptane-1,7-dioate (HKHD) to pyruvate and succinic semialdehyde. This is 4-hydroxy-2-oxo-heptane-1,7-dioate aldolase from Shigella boydii serotype 4 (strain Sb227).